The following is a 475-amino-acid chain: UDP-glycosyltransferase 1 (475 aa).

H15 functions as the Proton acceptor in the catalytic mechanism. An anthocyanidin is bound at residue H15. Catalysis depends on D117, which acts as the Charge relay. The UDP-alpha-D-glucose site is built by A345, Q347, H362, W365, N366, S367, and E370. An an anthocyanidin-binding site is contributed by G385. The UDP-alpha-D-glucose site is built by E386 and Q387.

Belongs to the UDP-glycosyltransferase family. Mostly expressed in leaves and flowers, and, to a lower extent, in roots and stems.

The enzyme catalyses (20S)-protopanaxadiol + UDP-alpha-D-glucose = (20S)-ginsenoside C-K + UDP + H(+). It carries out the reaction (20S)-ginsenoside Rg3 + UDP-alpha-D-glucose = (20S)-ginsenoside Rd + UDP + H(+). It catalyses the reaction (20S)-ginsenoside Rh2 + UDP-alpha-D-glucose = (20S)-ginsenoside F2 + UDP + H(+). The catalysed reaction is (20S)-protopanaxatriol + UDP-alpha-D-glucose = (20S)-ginsenoside F1 + UDP + H(+). The enzyme catalyses dammarenediol-II + UDP-alpha-D-glucose = (20S)-20-O-(beta-D-glucosyl)-3-hydroxydammarene + UDP + H(+). Its pathway is secondary metabolite biosynthesis; terpenoid biosynthesis. Its function is as follows. Component of the dammarane-type triterpene saponins (e.g. ginsenosides or panaxosides) biosynthetic pathway. Glycosyltransferase that catalyzes the biosynthesis of ginsenoside F1 from protopanaxatriol (PPT). Triggers C20-OH glycosylation of ginsenoside Rg3 to produce ginsenoside Rd. Mediates the conversion of protopanaxadiol (PPD) to the ginsenoside compound K. catalyzes the production of 20S-O-beta-(D-glucosyl)-dammarenediol II form dammarenediol II (DM). In Panax ginseng (Korean ginseng), this protein is UDP-glycosyltransferase 1.